The sequence spans 622 residues: Basal cell adhesion molecule (622 aa).

Residues 1–25 form the signal peptide; it reads MEPPDARAGLLWLTFLLSGYSGAQA. 2 Ig-like V-type domains span residues 26–135 and 140–250; these read ELHV…SSVR and PEDT…HTFR. At 26–541 the chain is on the extracellular side; that stretch reads ELHVSVPPRV…GSVAPQTAQA (516 aa). 3 disulfide bridges follow: Cys47–Cys118, Cys165–Cys230, and Cys284–Cys330. 3 Ig-like C2-type domains span residues 267 to 342, 356 to 435, and 442 to 532; these read PSTT…EEVQ, PLEL…QSFQ, and PELK…FHFG. N-linked (GlcNAc...) asparagine glycosylation is found at Asn314, Asn323, Asn370, and Asn377. Disulfide bonds link Cys378–Cys418 and Cys467–Cys516. A helical membrane pass occupies residues 542 to 562; the sequence is GVAVMAVAVSVGLLLLVVAAF. Over 563–622 the chain is Cytoplasmic; that stretch reads YCMRRKGRPGCCRRAEKGAPPAREPELSHSGSERPEHTGLLMGGPSGGGRGGSGGFGDEC. The disordered stretch occupies residues 574–622; that stretch reads CRRAEKGAPPAREPELSHSGSERPEHTGLLMGGPSGGGRGGSGGFGDEC. Residues 575 to 599 are compositionally biased toward basic and acidic residues; the sequence is RRAEKGAPPAREPELSHSGSERPEH. Residues Ser590, Ser592, Ser594, and Ser615 each carry the phosphoserine modification. The segment covering 603 to 622 has biased composition (gly residues); the sequence is LMGGPSGGGRGGSGGFGDEC.

In terms of assembly, homodimer. Interacts with ITGA4:ITGB1. Interacts with spectrins SPTA1 and SPTB1. Epinephrine-stimulated phosphorylation of Ser-615 by PKA enhances adhesion to laminin. Ser-615 can also be phosphorylated by AKT1.

It is found in the cell membrane. In terms of biological role, transmembrane glycoprotein that functions as both a receptor and an adhesion molecule playing a crucial role in cell adhesion, motility, migration and invasion. Extracellular domain enables binding to extracellular matrix proteins, such as laminin, integrin and other ligands while its intracellular domain interacts with cytoskeletal proteins like hemoglobin, facilitating cell signal transduction. Serves as a receptor for laminin alpha-5/LAMA5 to promote cell adhesion. Mechanistically, JAK2 induces BCAM phosphorylation and activates its adhesion to laminin by stimulating a Rap1/AKT signaling pathway in the absence of EPOR. This chain is Basal cell adhesion molecule (Bcam), found in Mus musculus (Mouse).